A 308-amino-acid chain; its full sequence is Olfactory receptor 13H1 (308 aa).

Residues 1-25 (MAMDNVTAVFQFLLIGISNYPQWRD) are Extracellular-facing. A glycan (N-linked (GlcNAc...) asparagine) is linked at asparagine 5. The helical transmembrane segment at 26 to 46 (TFFTLVLIIYLSTLLGNGFMI) threads the bilayer. The Cytoplasmic segment spans residues 47-54 (FLIHFDPN). Residues 55-75 (LHTPIYFFLSNLSFLDLCYGT) traverse the membrane as a helical segment. Over 76–99 (ASMPQALVHCFSTHPYLSYPRCLA) the chain is Extracellular. A disulfide bridge links cysteine 97 with cysteine 188. The chain crosses the membrane as a helical span at residues 100 to 120 (QTSVSLALATAECLLLAAMAY). Topologically, residues 121–139 (DRVVAISNPLRYSVVMNGP) are cytoplasmic. Residues 140 to 159 (VCVCLVATSWGTSLVLTAML) form a helical membrane-spanning segment. The Extracellular portion of the chain corresponds to 160-196 (ILSLRLHFCGANVINHFACEILSLIKLTCSDTSLNEF). Residues 197-216 (MILITSIFTLLLPFGFVLLS) form a helical membrane-spanning segment. Residues 217–236 (YIRIAMAIIRIRSLQGRLKA) lie on the Cytoplasmic side of the membrane. The chain crosses the membrane as a helical span at residues 237-257 (FTTCGSHLTVVTIFYGSAISM). Residues 258 to 270 (YMKTQSKSYPDQD) are Extracellular-facing. A helical membrane pass occupies residues 271–291 (KFISVFYGALTPMLNPLIYSL). The Cytoplasmic segment spans residues 292 to 308 (RKKDVKRAIRKVMLKRT).

This sequence belongs to the G-protein coupled receptor 1 family.

It is found in the cell membrane. Its function is as follows. Odorant receptor. The protein is Olfactory receptor 13H1 (OR13H1) of Homo sapiens (Human).